Reading from the N-terminus, the 29-residue chain is Toxin Bcg III 15.67 (29 aa).

The EGF-like domain maps to 2–29; the sequence is QGTACTGEHAHSFCLNGGTCRHIQQLGE. Cys6 and Cys21 are oxidised to a cystine.

Its subcellular location is the secreted. It localises to the nematocyst. Its function is as follows. Has both toxic and EGF activity. This Bunodosoma cangicum (Sea anemone) protein is Toxin Bcg III 15.67.